Reading from the N-terminus, the 246-residue chain is Probable transcriptional regulatory protein YebC (246 aa).

The segment at 1–20 is disordered; it reads MAGHSKWANTRHRKAAQDAK.

This sequence belongs to the TACO1 family.

Its subcellular location is the cytoplasm. In Shigella dysenteriae serotype 1 (strain Sd197), this protein is Probable transcriptional regulatory protein YebC.